The following is a 237-amino-acid chain: Methylosome subunit pICln (237 aa).

An N-acetylserine modification is found at Ser2. Phosphoserine occurs at positions 102, 144, 193, 195, 198, and 210. The interval 135–159 (LHPDPEDEDSDDYDGEEYDVEAHEQ) is disordered. A compositionally biased stretch (acidic residues) spans 139–153 (PEDEDSDDYDGEEYD). Thr223 carries the phosphothreonine modification.

It belongs to the pICln (TC 1.A.47) family. Component of the methylosome, a 20S complex containing at least PRMT5/SKB1, WDR77/MEP50 and CLNS1A/pICln. May mediate SNRPD1 and SNRPD3 methylation. Forms a 6S pICln-Sm complex composed of CLNS1A/pICln, SNRPD1, SNRPD2, SNRPE, SNRPF and SNRPG; ring-like structure where CLNS1A/pICln mimics additional Sm proteins and which is unable to assemble into the core snRNP. Interacts with LSM10 and LSM11.

The protein resides in the cytoplasm. The protein localises to the cytosol. It is found in the nucleus. Its subcellular location is the cytoskeleton. Its function is as follows. Involved in both the assembly of spliceosomal snRNPs and the methylation of Sm proteins. Chaperone that regulates the assembly of spliceosomal U1, U2, U4 and U5 small nuclear ribonucleoproteins (snRNPs), the building blocks of the spliceosome, and thereby plays an important role in the splicing of cellular pre-mRNAs. Most spliceosomal snRNPs contain a common set of Sm proteins SNRPB, SNRPD1, SNRPD2, SNRPD3, SNRPE, SNRPF and SNRPG that assemble in a heptameric protein ring on the Sm site of the small nuclear RNA to form the core snRNP (Sm core). In the cytosol, the Sm proteins SNRPD1, SNRPD2, SNRPE, SNRPF and SNRPG are trapped in an inactive 6S pICln-Sm complex by the chaperone CLNS1A that controls the assembly of the core snRNP. Dissociation by the SMN complex of CLNS1A from the trapped Sm proteins and their transfer to an SMN-Sm complex triggers the assembly of core snRNPs and their transport to the nucleus. In Homo sapiens (Human), this protein is Methylosome subunit pICln (CLNS1A).